A 180-amino-acid chain; its full sequence is ATP-dependent Clp protease proteolytic subunit 2 (180 aa).

Residue S86 is the Nucleophile of the active site. H111 is a catalytic residue.

This sequence belongs to the peptidase S14 family. As to quaternary structure, fourteen ClpP subunits assemble into 2 heptameric rings which stack back to back to give a disk-like structure with a central cavity, resembling the structure of eukaryotic proteasomes.

Its subcellular location is the cytoplasm. The catalysed reaction is Hydrolysis of proteins to small peptides in the presence of ATP and magnesium. alpha-casein is the usual test substrate. In the absence of ATP, only oligopeptides shorter than five residues are hydrolyzed (such as succinyl-Leu-Tyr-|-NHMec, and Leu-Tyr-Leu-|-Tyr-Trp, in which cleavage of the -Tyr-|-Leu- and -Tyr-|-Trp bonds also occurs).. In terms of biological role, cleaves peptides in various proteins in a process that requires ATP hydrolysis. Has a chymotrypsin-like activity. Plays a major role in the degradation of misfolded proteins. The protein is ATP-dependent Clp protease proteolytic subunit 2 of Tropheryma whipplei (strain Twist) (Whipple's bacillus).